We begin with the raw amino-acid sequence, 226 residues long: Cytidylate kinase (226 aa).

An ATP-binding site is contributed by 12-20; it reads GPSGAGKGT.

The protein belongs to the cytidylate kinase family. Type 1 subfamily.

The protein resides in the cytoplasm. The enzyme catalyses CMP + ATP = CDP + ADP. The catalysed reaction is dCMP + ATP = dCDP + ADP. The chain is Cytidylate kinase from Vibrio vulnificus (strain CMCP6).